Here is a 592-residue protein sequence, read N- to C-terminus: Polyadenylate-binding protein, cytoplasmic and nuclear (592 aa).

Basic and acidic residues predominate over residues 1–10; sequence MSDITEKTAE. A disordered region spans residues 1-43; that stretch reads MSDITEKTAEQLENLQINDDQQPAQSASAPSTSASESEASSVS. Over residues 11–20 the composition is skewed to polar residues; the sequence is QLENLQINDD. Over residues 21–43 the composition is skewed to low complexity; sequence QQPAQSASAPSTSASESEASSVS. RRM domains lie at 50–128, 138–215, 231–308, and 334–411; these read ASLY…WSER, GNIF…MHVP, TNIY…RAQK, and VNLF…IAQR. The PABC domain occupies 507–586; that stretch reads NQFPRHQQQH…ALAAYENFKK (80 aa).

This sequence belongs to the polyadenylate-binding protein type-1 family.

Its subcellular location is the cytoplasm. It is found in the nucleus. Functionally, binds the poly(A) tail of mRNA. Appears to be an important mediator of the multiple roles of the poly(A) tail in mRNA biogenesis, stability and translation. In the nucleus, involved in both mRNA cleavage and polyadenylation. Is also required for efficient mRNA export to the cytoplasm. Acts in concert with a poly(A)-specific nuclease (PAN) to affect poly(A) tail shortening, which may occur concomitantly with either nucleocytoplasmic mRNA transport or translational initiation. In the cytoplasm, stimulates translation initiation and regulates mRNA decay through translation termination-coupled poly(A) shortening, probably mediated by PAN. This Kluyveromyces lactis (strain ATCC 8585 / CBS 2359 / DSM 70799 / NBRC 1267 / NRRL Y-1140 / WM37) (Yeast) protein is Polyadenylate-binding protein, cytoplasmic and nuclear (PAB1).